The chain runs to 208 residues: Uracil phosphoribosyltransferase (208 aa).

5-phospho-alpha-D-ribose 1-diphosphate contacts are provided by residues R78, R103, and 130 to 138 (DPMLATGGS). Residues I193 and 198-200 (GDA) contribute to the uracil site. Residue D199 coordinates 5-phospho-alpha-D-ribose 1-diphosphate.

This sequence belongs to the UPRTase family. It depends on Mg(2+) as a cofactor.

The catalysed reaction is UMP + diphosphate = 5-phospho-alpha-D-ribose 1-diphosphate + uracil. Its pathway is pyrimidine metabolism; UMP biosynthesis via salvage pathway; UMP from uracil: step 1/1. Allosterically activated by GTP. In terms of biological role, catalyzes the conversion of uracil and 5-phospho-alpha-D-ribose 1-diphosphate (PRPP) to UMP and diphosphate. The protein is Uracil phosphoribosyltransferase of Klebsiella pneumoniae (strain 342).